The sequence spans 466 residues: Cysteine--tRNA ligase (466 aa).

Zn(2+) is bound at residue C27. The 'HIGH' region signature appears at 29-39; sequence PTVYNYFHIGN. Positions 207, 232, and 236 each coordinate Zn(2+). The 'KMSKS' region signature appears at 264–268; that stretch reads KMSKS. K267 lines the ATP pocket.

This sequence belongs to the class-I aminoacyl-tRNA synthetase family. As to quaternary structure, monomer. The cofactor is Zn(2+).

Its subcellular location is the cytoplasm. The enzyme catalyses tRNA(Cys) + L-cysteine + ATP = L-cysteinyl-tRNA(Cys) + AMP + diphosphate. The protein is Cysteine--tRNA ligase of Clostridium novyi (strain NT).